Reading from the N-terminus, the 433-residue chain is Chaperone SurA (433 aa).

The N-terminal stretch at 1–20 (MKNWRTLIFGLMFSVSTAFA) is a signal peptide. PpiC domains follow at residues 171-272 (DTEL…KVND) and 282-382 (VTEV…QLLD).

The protein localises to the periplasm. It catalyses the reaction [protein]-peptidylproline (omega=180) = [protein]-peptidylproline (omega=0). In terms of biological role, chaperone involved in the correct folding and assembly of outer membrane proteins. Recognizes specific patterns of aromatic residues and the orientation of their side chains, which are found more frequently in integral outer membrane proteins. May act in both early periplasmic and late outer membrane-associated steps of protein maturation. The protein is Chaperone SurA of Photorhabdus laumondii subsp. laumondii (strain DSM 15139 / CIP 105565 / TT01) (Photorhabdus luminescens subsp. laumondii).